We begin with the raw amino-acid sequence, 235 residues long: Transcription factor MYB59 (235 aa).

2 HTH myb-type domains span residues 5–57 (QEEY…VNYL) and 58–112 (HPGL…RKKA). The H-T-H motif DNA-binding region spans 33–57 (WDFVAKVSGLNRTGKSCRLRWVNYL). Positions 62-65 (KRGK) match the Bipartite nuclear localization signal 1 motif. A DNA-binding region (H-T-H motif) is located at residues 85–108 (WSKIARKLPGRTDNEIKNYWRTHM). The short motif at 109-117 (RKKAQEKKR) is the Bipartite nuclear localization signal 2 element. The disordered stretch occupies residues 109 to 147 (RKKAQEKKRPMSPTSSSSNCCSSSMTTTTSQDTGGSNGK). A compositionally biased stretch (low complexity) spans 119–138 (MSPTSSSSNCCSSSMTTTTS).

Mainly expressed in leaves and seedlings, and to a lower extent, in roots, stems and inflorescences. Isoform MYB59-1 and isoform MYB59-2 are present in roots, leaves, and seedlings, while the expression of isoform MYB59-3 and isoform MYB59-4 is confined to seedlings.

It is found in the nucleus. Functionally, transcription factor. This Arabidopsis thaliana (Mouse-ear cress) protein is Transcription factor MYB59 (MYB59).